Consider the following 116-residue polypeptide: Acyl-CoA-binding protein homolog 3 (116 aa).

In terms of domain architecture, ACB spans 3–92 (LQEKFDAAVE…LNDMFDKIAE (90 aa)). Residues 34–38 (YSLFK), Lys-60, and Tyr-79 each bind an acyl-CoA.

The protein belongs to the ACBP family.

Binds medium- and long-chain acyl-CoA esters with very high affinity and may function as an intracellular carrier of acyl-CoA esters. The polypeptide is Acyl-CoA-binding protein homolog 3 (acbp-3) (Caenorhabditis elegans).